The sequence spans 1102 residues: Ubiquitin carboxyl-terminal hydrolase 7 (1102 aa).

Residues 1-10 (MNHQQQQQQQ) show a composition bias toward low complexity. The tract at residues 1–38 (MNHQQQQQQQKAGEQQLSEPEDMEMEAGDTDDPPRITQ) is disordered. Residues 1-208 (MNHQQQQQQQ…APHGVAWDSK (208 aa)) form an interaction with TSPYL5 region. Serine 18 is subject to Phosphoserine. Residues 19–31 (EPEDMEMEAGDTD) are compositionally biased toward acidic residues. A Phosphoserine modification is found at serine 49. Residues 53 to 208 (NTAEEDMEDD…APHGVAWDSK (156 aa)) are interaction with p53/TP53, MDM2 and EBNA1. The MATH domain maps to 68 to 195 (EATFQFTVER…DDKVTFEVFV (128 aa)). A necessary for nuclear localization region spans residues 70–205 (TFQFTVERFS…QADAPHGVAW (136 aa)). In terms of domain architecture, USP spans 214-521 (VGLKNQGATC…NAYMLVYIRE (308 aa)). Cysteine 223 functions as the Nucleophile in the catalytic mechanism. The active-site Proton acceptor is histidine 464. An interaction with ICP0/VMW110 region spans residues 622–801 (LWPMQARSNG…HRVDVIFCDK (180 aa)). Lysine 869 bears the N6-acetyllysine; alternate mark. Lysine 869 is covalently cross-linked (Glycyl lysine isopeptide (Lys-Gly) (interchain with G-Cter in SUMO2); alternate). Lysine 869 is covalently cross-linked (Glycyl lysine isopeptide (Lys-Gly) (interchain with G-Cter in ubiquitin); alternate). Residue lysine 882 forms a Glycyl lysine isopeptide (Lys-Gly) (interchain with G-Cter in SUMO2) linkage. Serine 963 carries the post-translational modification Phosphoserine. N6-acetyllysine occurs at positions 1084 and 1096.

The protein belongs to the peptidase C19 family. As to quaternary structure, monomer. Homodimer. Part of a complex with DAXX, MDM2, RASSF1 and USP7. Part of a complex with DAXX, MDM2 and USP7. Interacts with MDM2; the interaction is independent of p53/TP53. Interacts with DAXX; the interaction is direct and independent of MDM2 and p53/TP53. Component of a complex composed of KMT2E/MLL5 (isoform 3), OGT (isoform 1) and USP7; the complex stabilizes KMT2E/MLL5, preventing KMT2E/MLL5 ubiquitination and proteasomal-mediated degradation. Interacts (via MATH domain) with KMT2E/MLL5 isoform 3. Interacts with OGT isoform 1. Interacts with FOXO4; the interaction is enhanced in presence of hydrogen peroxide and occurs independently of p53/TP53. Interacts with p53/TP53; the interaction is enhanced in response to DNA damage. Interacts with TSPYL5; this impairs interaction with p53/TP53. Interacts with PTEN; the interaction is direct. Interacts with ATXN1 and the strength of interaction is influenced by the length of the poly-Gln region in ATXN1. A weaker interaction seen with mutants having longer poly-Gln regions. Interacts with KIAA1530/UVSSA. Interacts with ABRAXAS2; the interaction is direct. Identified in a complex with TP53/p53 and ABRAXAS2. Interacts with MEX3C and antagonizes its ability to degrade mRNA. Interacts with DNMT1 and UHRF1. Interacts with FOXP3. Interacts (via MATH domain) with RNF220. Associated component of the Polycomb group (PcG) multiprotein PRC1-like complex. Interacts with EPOP. Interacts with OTUD4 and USP9X; the interaction is direct. Interacts with CRY2. Interacts with REST. Interacts with ERCC6. Part of a complex consisting of USP7, MAGEL2 and TRIM27; directly interacts with MAGEL2; directly interacts with TRIM27. In terms of assembly, (Microbial infection) Isoform 1 and isoform 2 interact with herpesvirus 1 trans-acting transcriptional protein ICP0/VMW110. Binding to ICP0/VMW110 may modulate the substrate specificity or activity of USP7 to stabilize viral proteins. (Microbial infection) Interacts with Epstein-Barr virus EBNA1; the interaction is independent and simultaneous to EBNA1 interaction with USP7 as well as necessary for PML nuclear bodies disruption by EBNA1. EBNA1, USP7 and CSNK2B form a ternary complex. EBNA1 shows a 10-fold higher affinity than p53/TP53 and can compete with it for USP7 binding. As to quaternary structure, (Microbial infection) Interacts with human cytomegalovirus proteins UL35 and UL35A; these interactions inhibit the ability of USP7 to form nuclear bodies. In terms of assembly, (Microbial infection) Interacts with herpes virus 8/HHV-8 proteins vIRF-1 and vIRF-3; these interactions may disrupt TP53 signaling pathway during viral infection by decreasing the availability of USP7 for deubiquitinating and stabilizing TP53. (Microbial infection) Interacts with herpes virus 8/HHV-8 protein vIRF-2; this interaction modulates antiviral signaling via disruption of USP7 interactions with innate immune signaling proteins TRAF3 and TRAF6 thus affecting their ubiquitination. Post-translationally, isoform 1: Phosphorylated. Isoform 1 is phosphorylated at positions Ser-18 and Ser-963. Isoform 2: Not phosphorylated. In terms of processing, isoform 1: Polyneddylated. Isoform 2: Not Polyneddylated. Isoform 1 and isoform 2: Not sumoylated. Post-translationally, isoform 1 and isoform 2: Polyubiquitinated by herpesvirus 1 trans-acting transcriptional protein ICP0/VMW110; leading to its subsequent proteasomal degradation. Isoform 1: Ubiquitinated at Lys-869. In terms of tissue distribution, expressed in neural progenitor cells (at protein level). Widely expressed. Overexpressed in prostate cancer.

The protein resides in the nucleus. Its subcellular location is the cytoplasm. It is found in the PML body. The protein localises to the chromosome. It catalyses the reaction Thiol-dependent hydrolysis of ester, thioester, amide, peptide and isopeptide bonds formed by the C-terminal Gly of ubiquitin (a 76-residue protein attached to proteins as an intracellular targeting signal).. Its activity is regulated as follows. Inhibited by N-ethyl-maleimide (NEM) and divalent cations. Tolerates high concentrations of NaCl but is inhibited at concentrations of 195 mM and higher. Functionally, hydrolase that deubiquitinates target proteins such as ARMC5, FOXO4, DEPTOR, KAT5, p53/TP53, MDM2, ERCC6, DNMT1, UHRF1, PTEN, KMT2E/MLL5 and DAXX. Together with DAXX, prevents MDM2 self-ubiquitination and enhances the E3 ligase activity of MDM2 towards p53/TP53, thereby promoting p53/TP53 ubiquitination and proteasomal degradation. Deubiquitinates p53/TP53, preventing degradation of p53/TP53, and enhances p53/TP53-dependent transcription regulation, cell growth repression and apoptosis. Deubiquitinates p53/TP53 and MDM2 and strongly stabilizes p53/TP53 even in the presence of excess MDM2, and also induces p53/TP53-dependent cell growth repression and apoptosis. Deubiquitination of FOXO4 in presence of hydrogen peroxide is not dependent on p53/TP53 and inhibits FOXO4-induced transcriptional activity. In association with DAXX, is involved in the deubiquitination and translocation of PTEN from the nucleus to the cytoplasm, both processes that are counteracted by PML. Deubiquitinates KMT2E/MLL5 preventing KMT2E/MLL5 proteasomal-mediated degradation. Involved in cell proliferation during early embryonic development. Involved in transcription-coupled nucleotide excision repair (TC-NER) in response to UV damage: recruited to DNA damage sites following interaction with KIAA1530/UVSSA and promotes deubiquitination of ERCC6, preventing UV-induced degradation of ERCC6. Involved in maintenance of DNA methylation via its interaction with UHRF1 and DNMT1: acts by mediating deubiquitination of UHRF1 and DNMT1, preventing their degradation and promoting DNA methylation by DNMT1. Deubiquitinates alkylation repair enzyme ALKBH3. OTUD4 recruits USP7 and USP9X to stabilize ALKBH3, thereby promoting the repair of alkylated DNA lesions. Acts as a chromatin regulator via its association with the Polycomb group (PcG) multiprotein PRC1-like complex; may act by deubiquitinating components of the PRC1-like complex. Able to mediate deubiquitination of histone H2B; it is however unsure whether this activity takes place in vivo. Exhibits a preference towards 'Lys-48'-linked ubiquitin chains. Increases regulatory T-cells (Treg) suppressive capacity by deubiquitinating and stabilizing the transcription factor FOXP3 which is crucial for Treg cell function. Plays a role in the maintenance of the circadian clock periodicity via deubiquitination and stabilization of the CRY1 and CRY2 proteins. Deubiquitinates REST, thereby stabilizing REST and promoting the maintenance of neural progenitor cells. Deubiquitinates SIRT7, inhibiting SIRT7 histone deacetylase activity and regulating gluconeogenesis. Involved in the regulation of WASH-dependent actin polymerization at the surface of endosomes and the regulation of endosomal protein recycling. It maintains optimal WASH complex activity and precise F-actin levels via deubiquitination of TRIM27 and WASHC1. Mediates the deubiquitination of phosphorylated DEPTOR, promoting its stability and leading to decreased mTORC1 signaling. Its function is as follows. (Microbial infection) Contributes to the overall stabilization and trans-activation capability of the herpesvirus 1 trans-acting transcriptional protein ICP0/VMW110 during HSV-1 infection. In terms of biological role, (Microbial infection) Upon infection with Epstein-Barr virus, the interaction with viral EBNA1 increases the association of USP7 with PML proteins, which is required for the polyubiquitylation and degradation of PML. This chain is Ubiquitin carboxyl-terminal hydrolase 7, found in Homo sapiens (Human).